The chain runs to 253 residues: Tryptophan synthase alpha chain (253 aa).

Residues Glu-47 and Asp-58 each act as proton acceptor in the active site.

This sequence belongs to the TrpA family. Tetramer of two alpha and two beta chains.

The enzyme catalyses (1S,2R)-1-C-(indol-3-yl)glycerol 3-phosphate + L-serine = D-glyceraldehyde 3-phosphate + L-tryptophan + H2O. It functions in the pathway amino-acid biosynthesis; L-tryptophan biosynthesis; L-tryptophan from chorismate: step 5/5. Its function is as follows. The alpha subunit is responsible for the aldol cleavage of indoleglycerol phosphate to indole and glyceraldehyde 3-phosphate. This is Tryptophan synthase alpha chain from Lactococcus lactis subsp. lactis (strain IL1403) (Streptococcus lactis).